Here is a 988-residue protein sequence, read N- to C-terminus: Chloride channel protein 1 (988 aa).

Topologically, residues 1–118 are cytoplasmic; the sequence is MEQSRSQQRG…VVRRKLGEDG (118 aa). Residues 65-75 show a composition bias toward basic and acidic residues; it reads HKEQFSDREQD. Residues 65-92 are disordered; it reads HKEQFSDREQDIGMPKKTGSSSTVDSKD. A helical membrane pass occupies residues 119-150; the sequence is IFLVLLGLLMALVSWSMDYVSAKSLQAYKWSY. The Extracellular portion of the chain corresponds to 151-158; sequence AQMQPSLP. Residues 159-179 traverse the membrane as a helical segment; it reads LQFLVWVTFPLVLILFSALFC. Residues 180-183 lie on the Cytoplasmic side of the membrane; it reads HLIS. Residues 184-189 constitute an intramembrane region (note=Loop between two helices); sequence PQAVGS. The short motif at 188-192 is the Selectivity filter part_1 element; sequence GSGIP. A chloride-binding site is contributed by Ser189. Residues 190 to 195 constitute an intramembrane region (helical); the sequence is GIPEMK. Over 196–208 the chain is Cytoplasmic; that stretch reads TILRGVVLKEYLT. An intramembrane region (helical) is located at residues 209 to 224; sequence MKAFVAKVVALTAGLG. The note=Loop between two helices intramembrane region spans 225–230; sequence SGIPVG. The Selectivity filter part_2 motif lies at 230–234; it reads GKEGP. Residues 231–246 constitute an intramembrane region (helical); that stretch reads KEGPFVHIASICAAVL. At 247 to 268 the chain is on the cytoplasmic side; that stretch reads SKFMSVFCGVYEQPYYYSDILT. 2 intramembrane regions (helical) span residues 269 to 280 and 281 to 290; these read VGCAVGVGCCFG and TPLGGVLFSI. At 291 to 301 the chain is on the cytoplasmic side; sequence EVTSTYFAVRN. The chain crosses the membrane as a helical span at residues 302–321; that stretch reads YWRGFFAATFSAFVFRVLAV. Residues 322–347 lie on the Extracellular side of the membrane; the sequence is WNKDAVTITALFRTNFRMDFPFDLKE. The helical transmembrane segment at 348-376 threads the bilayer; the sequence is LPAFAAIGICCGLLGAVFVYLHRQVMLGV. The Cytoplasmic portion of the chain corresponds to 377 to 390; it reads RKHKALSQFLAKHR. Residues 391–408 traverse the membrane as a helical segment; the sequence is LLYPGIVTFVIASFTFPP. The Extracellular portion of the chain corresponds to 409-414; sequence GMGQFM. Residues 415–418 constitute an intramembrane region (note=Loop between two helices); the sequence is AGEL. An intramembrane region (helical) is located at residues 419–426; the sequence is MPREAIST. At 427 to 457 the chain is on the extracellular side; that stretch reads LFDNNTWVKHAGDPESLGQSAVWIHPRVNVV. An intramembrane region (helical) is located at residues 458 to 475; sequence IIIFLFFVMKFWMSIVAT. Positions 476–482 form an intramembrane region, note=Loop between two helices; it reads TMPIPCG. The Selectivity filter part_3 motif lies at 482–486; it reads GGFMP. An intramembrane region (helical) is located at residues 483-498; the sequence is GFMPVFVLGAAFGRLV. Residue Phe484 coordinates chloride. At 499–521 the chain is on the extracellular side; it reads GEIMAMLFPDGILFDDIIYKILP. An intramembrane region (helical) is located at residues 522-538; it reads GGYAVIGAAALTGAVSH. Positions 539 to 540 form an intramembrane region, note=Loop between two helices; that stretch reads TV. The segment at residues 541–554 is an intramembrane region (helical); that stretch reads STAVICFELTGQIA. Residues 555 to 557 are Extracellular-facing; sequence HIL. Residues 558–571 constitute an intramembrane region (helical); it reads PMMVAVILANMVAQ. Positions 572 to 575 form an intramembrane region, note=Loop between two helices; the sequence is SLQP. The helical intramembrane region spans 576 to 578; it reads SLY. Tyr578 is a chloride binding site. Topologically, residues 579 to 988 are cytoplasmic; the sequence is DSIIQVKKLP…DEEDEDELIL (410 aa). Residues 609–668 enclose the CBS 1 domain; the sequence is MVRDVKFVSASYTYGELRTLLQTTTVKTLPLVDSKDSMILLGSVERSELQALLQRHLCPE. The segment at 713-764 is disordered; the sequence is EDEDEDLSGKSELPPSLALHPSTTAPLSPEEPNGPLPGHKQQPEAPEPAGQR. The region spanning 821-876 is the CBS 2 domain; the sequence is IDQSPFQLVEQTTLHKTHTLFSLLGLHLAYVTSMGKLRGVLALEELQKAIEGHTKS. Residues 880–988 are disordered; sequence LRPPLASFRN…DEEDEDELIL (109 aa). At Ser886 the chain carries Phosphoserine. The segment covering 887 to 906 has biased composition (polar residues); the sequence is FRNTTSTRKSTGAPPSSAEN. Positions 929-941 are enriched in pro residues; the sequence is TPVPSPSPEPPLS. Composition is skewed to acidic residues over residues 950-967 and 979-988; these read ELEELELVESPGLEEELA and DEEDEDELIL.

This sequence belongs to the chloride channel (TC 2.A.49) family. ClC-1/CLCN1 subfamily. Homodimer. As to expression, predominantly expressed in skeletal muscles.

Its subcellular location is the cell membrane. It is found in the sarcolemma. The protein localises to the T-tubule. It carries out the reaction chloride(in) = chloride(out). It catalyses the reaction thiocyanate(in) = thiocyanate(out). The catalysed reaction is bromide(in) = bromide(out). The enzyme catalyses nitrate(in) = nitrate(out). It carries out the reaction iodide(out) = iodide(in). With respect to regulation, modulated by membrane voltage with depolarization favouring channel opening and hyperpolarization favouring channel closure. Inhibited by acidic pH and ATP binding due to a shift of voltage dependence of common gating to more positive voltages. Inhibited by 9-anthracene-carboxylic. Voltage-gated chloride channel involved in skeletal muscle excitability. Generates most of the plasma membrane chloride conductance in skeletal muscle fibers, stabilizes the resting membrane potential and contributes to the repolarization phase during action potential firing. Forms a homodimeric channel where each subunit has its own ion conduction pathway. Conducts double-barreled currents controlled by two types of gates, two fast glutamate gates that control each subunit independently and a slow common gate that opens and shuts off both subunits simultaneously. Has a significant open probability at muscle resting potential and is further activated upon membrane depolarization. Permeable to small monovalent anions with ion selectivity for chloride &gt; thiocyanate &gt; bromide &gt; nitrate &gt; iodide. In Homo sapiens (Human), this protein is Chloride channel protein 1.